The chain runs to 351 residues: Hepatocyte nuclear factor 3-gamma (351 aa).

Residues 52–73 (PGGLPASPLPTGPLAPPAPTAP) are compositionally biased toward pro residues. The tract at residues 52–94 (PGGLPASPLPTGPLAPPAPTAPLGPTFPGLGASTGGGSSSGYG) is disordered. The segment covering 83 to 94 (ASTGGGSSSGYG) has biased composition (gly residues). The fork-head DNA-binding region spans 118-212 (KPPYSYISLI…ENGCYLRRQK (95 aa)). The tract at residues 218-275 (EKVKKGGGGSSASRNSAGSASTATAPAATVASTPQPQPPPPEPEAQGGDEVGALDCGS) is disordered. Residues 228-251 (SASRNSAGSASTATAPAATVASTP) are compositionally biased toward low complexity.

It is found in the nucleus. Its function is as follows. Transcription activator for a number of liver genes such as AFP, albumin, tyrosine aminotransferase, PEPCK, etc. Interacts with the cis-acting regulatory regions of these genes. The chain is Hepatocyte nuclear factor 3-gamma (FOXA3) from Bos taurus (Bovine).